The following is a 116-amino-acid chain: NADH dehydrogenase [ubiquinone] 1 alpha subcomplex subunit 5 (116 aa).

An N-acetylalanine modification is found at Ala-2. 3 positions are modified to N6-acetyllysine: Lys-30, Lys-46, and Lys-60. Phosphoserine is present on Ser-89. N6-acetyllysine; alternate is present on Lys-98. The residue at position 98 (Lys-98) is an N6-succinyllysine; alternate.

Belongs to the complex I NDUFA5 subunit family. In terms of assembly, complex I is composed of 45 different subunits.

It localises to the mitochondrion inner membrane. Accessory subunit of the mitochondrial membrane respiratory chain NADH dehydrogenase (Complex I), that is believed not to be involved in catalysis. Complex I functions in the transfer of electrons from NADH to the respiratory chain. The immediate electron acceptor for the enzyme is believed to be ubiquinone. The sequence is that of NADH dehydrogenase [ubiquinone] 1 alpha subcomplex subunit 5 (NDUFA5) from Macaca fascicularis (Crab-eating macaque).